A 57-amino-acid chain; its full sequence is Large ribosomal subunit protein bL32 (57 aa).

The protein belongs to the bacterial ribosomal protein bL32 family.

The polypeptide is Large ribosomal subunit protein bL32 (Bacillus licheniformis (strain ATCC 14580 / DSM 13 / JCM 2505 / CCUG 7422 / NBRC 12200 / NCIMB 9375 / NCTC 10341 / NRRL NRS-1264 / Gibson 46)).